A 361-amino-acid polypeptide reads, in one-letter code: Mitochondrial import receptor subunit TOM40 homolog (361 aa).

The segment at 1 to 73 is disordered; the sequence is MGNVLAASSP…GAAAASEDGS (73 aa). Positions 11-36 are enriched in pro residues; that stretch reads PAGPPPPPTPSLVGLPPPPPSPPGFT. Positions 40–50 are enriched in gly residues; sequence LGGGLGTGSST. Residues 51 to 69 show a composition bias toward low complexity; that stretch reads GRGSERTPGAAASGAAAAS.

It belongs to the Tom40 family. In terms of assembly, forms part of the preprotein translocase complex of the outer mitochondrial membrane (TOM complex) which consists of at least 7 different proteins (TOMM5, TOMM6, TOMM7, TOMM20, TOMM22, TOMM40 and TOMM70). Interacts with mitochondrial targeting sequences. Interacts with TIMM29; linking the TIM22 complex to the TOM complex. Forms a complex with BCAP31 (via C-terminus) which mediates the translocation of components of the mitochondrial membrane respiratory chain NADH dehydrogenase (Complex I) from the cytosol to the mitochondria. Interacts (via N-terminus) with CYP1A1 (via mitochondrial targeting signal); this interaction is required for CYP1A1 translocation across the mitochondrial outer membrane.

The protein resides in the mitochondrion outer membrane. In terms of biological role, channel-forming protein essential for import of protein precursors into mitochondria. Plays a role in the assembly of the mitochondrial membrane respiratory chain NADH dehydrogenase (Complex I) by forming a complex with BCAP31 and mediating the translocation of Complex I components from the cytosol to the mitochondria. The chain is Mitochondrial import receptor subunit TOM40 homolog (Tomm40) from Mus musculus (Mouse).